A 101-amino-acid chain; its full sequence is Putative RNA-binding protein RbpA (101 aa).

The 78-residue stretch at 2 to 79 (SIYVGNLSYD…RDLKVNKAKP (78 aa)) folds into the RRM domain. Over residues 73–83 (KVNKAKPRENR) the composition is skewed to basic and acidic residues. Positions 73–101 (KVNKAKPRENRSGGGSFGGGRKSYGGSRY) are disordered. Residues 84 to 101 (SGGGSFGGGRKSYGGSRY) show a composition bias toward gly residues.

In Synechocystis sp. (strain ATCC 27184 / PCC 6803 / Kazusa), this protein is Putative RNA-binding protein RbpA (rbpA).